The following is a 220-amino-acid chain: Aspartic protease inhibitor 5 (220 aa).

Positions 1–23 (MMKCLFLLCLCLLPIVVFSSTFT) are cleaved as a signal peptide. Residues 24 to 32 (SQNLIDLPS) constitute a propeptide that is removed on maturation. A Vacuolar targeting signal motif is present at residues 26 to 31 (NLIDLP). Asn-51 carries N-linked (GlcNAc...) asparagine glycosylation. Intrachain disulfides connect Cys-80/Cys-125 and Cys-174/Cys-185.

Belongs to the protease inhibitor I3 (leguminous Kunitz-type inhibitor) family.

It is found in the vacuole. In terms of biological role, inhibitor of cathepsin D (aspartic protease). May also inhibit trypsin and chymotrypsin (serine proteases). Protects the plant by inhibiting proteases of invading organisms. This is Aspartic protease inhibitor 5 from Solanum tuberosum (Potato).